A 204-amino-acid chain; its full sequence is Guanylate kinase (204 aa).

The region spanning 1-182 (MLYIISAPSG…ALSDLNTIIC (182 aa)) is the Guanylate kinase-like domain. 7–14 (APSGTGKS) is a binding site for ATP.

Belongs to the guanylate kinase family.

The protein resides in the cytoplasm. The catalysed reaction is GMP + ATP = GDP + ADP. In terms of biological role, essential for recycling GMP and indirectly, cGMP. This chain is Guanylate kinase, found in Baumannia cicadellinicola subsp. Homalodisca coagulata.